Reading from the N-terminus, the 156-residue chain is Large ribosomal subunit protein uL22c (156 aa).

It belongs to the universal ribosomal protein uL22 family. In terms of assembly, part of the 50S ribosomal subunit.

It localises to the plastid. It is found in the chloroplast. This protein binds specifically to 23S rRNA. Its function is as follows. The globular domain of the protein is located near the polypeptide exit tunnel on the outside of the subunit, while an extended beta-hairpin is found that lines the wall of the exit tunnel in the center of the 70S ribosome. The polypeptide is Large ribosomal subunit protein uL22c (rpl22) (Buxus microphylla (Littleleaf boxwood)).